Consider the following 563-residue polypeptide: Arginine--tRNA ligase (563 aa).

The short motif at 121–131 (PNIAKPFSIGH) is the 'HIGH' region element.

This sequence belongs to the class-I aminoacyl-tRNA synthetase family. In terms of assembly, monomer.

It localises to the cytoplasm. It catalyses the reaction tRNA(Arg) + L-arginine + ATP = L-arginyl-tRNA(Arg) + AMP + diphosphate. The protein is Arginine--tRNA ligase of Streptococcus pyogenes serotype M6 (strain ATCC BAA-946 / MGAS10394).